An 89-amino-acid chain; its full sequence is Large ribosomal subunit protein bL27 (89 aa).

A disordered region spans residues 1–23; sequence MAHKKAGGSSRNGRDSAGKRLGI.

It belongs to the bacterial ribosomal protein bL27 family.

The polypeptide is Large ribosomal subunit protein bL27 (Rhodopseudomonas palustris (strain BisA53)).